A 60-amino-acid chain; its full sequence is UPF0337 protein asr1134 (60 aa).

Basic and acidic residues-rich tracts occupy residues 1 to 18 (MSLEDRAKATGKNIEGKA) and 29 to 60 (PEDKAEGKAKQAESEVRHGVEDVKDNVKKKID). The segment at 1-60 (MSLEDRAKATGKNIEGKAQEALGNVTGDPEDKAEGKAKQAESEVRHGVEDVKDNVKKKID) is disordered.

This sequence belongs to the UPF0337 (CsbD) family.

This chain is UPF0337 protein asr1134, found in Nostoc sp. (strain PCC 7120 / SAG 25.82 / UTEX 2576).